The sequence spans 63 residues: Putative transmembrane protein ORF63 (63 aa).

Residues 1–8 (MQSGNFTL) lie on the Extracellular side of the membrane. A helical membrane pass occupies residues 9–29 (EVIMYLINSILAFIMIFFTFV). The Cytoplasmic portion of the chain corresponds to 30 to 31 (NP). Residues 32 to 52 (SLLKCQYWTYILVALITAIIF) traverse the membrane as a helical segment. The Extracellular portion of the chain corresponds to 53-63 (HTGSKVGKSSG).

It localises to the host membrane. This Acidianus filamentous virus 1 (isolate United States/Yellowstone) (AFV-1) protein is Putative transmembrane protein ORF63.